The primary structure comprises 273 residues: HTH-type transcriptional activator RhaS (273 aa).

Residues 174–272 (YQLLDWLQNN…SQSPRDLRSQ (99 aa)) enclose the HTH araC/xylS-type domain. DNA-binding regions (H-T-H motif) lie at residues 191–212 (PELA…KNKT) and 239–262 (VTDI…KREF).

In terms of assembly, binds DNA as a dimer.

Its subcellular location is the cytoplasm. Its function is as follows. Activates expression of the rhaBAD and rhaT operons. This is HTH-type transcriptional activator RhaS from Yersinia pseudotuberculosis serotype O:1b (strain IP 31758).